A 411-amino-acid chain; its full sequence is Arginine deiminase (411 aa).

C401 functions as the Amidino-cysteine intermediate in the catalytic mechanism.

Belongs to the arginine deiminase family.

It is found in the cytoplasm. The enzyme catalyses L-arginine + H2O = L-citrulline + NH4(+). It functions in the pathway amino-acid degradation; L-arginine degradation via ADI pathway; carbamoyl phosphate from L-arginine: step 1/2. This Streptococcus equi subsp. zooepidemicus (strain H70) protein is Arginine deiminase.